Reading from the N-terminus, the 772-residue chain is UDP-N-acetylmuramoyl-L-alanyl-D-glutamate--2,6-diaminopimelate ligase MurE homolog, chloroplastic (772 aa).

A chloroplast-targeting transit peptide spans 1 to 40 (MAFTFLSPHPVFLSLTGTTSSFSYKPVLLPFSRNSRTLTV). 2 disordered regions span residues 42 to 87 (AGPA…KLEE) and 141 to 168 (LLKP…DVTD). 2 stretches are compositionally biased toward acidic residues: residues 54–63 (ADDDPPEAPE) and 158–168 (EGNEEEGDVTD). Phosphoserine is present on S194.

Belongs to the MurCDEF family. MurE subfamily. As to quaternary structure, component of the plastid-encoded plastid RNA polymerase (PEP) complex. As to expression, expressed in leaves and flowers.

It localises to the plastid. The protein localises to the chloroplast. Involved in chloroplast biogenesis. Required for thylakoid membrane development. Seems to be required for plastid-encoded plastid RNA polymerase (PEP)-dependent gene expression. The sequence is that of UDP-N-acetylmuramoyl-L-alanyl-D-glutamate--2,6-diaminopimelate ligase MurE homolog, chloroplastic from Arabidopsis thaliana (Mouse-ear cress).